A 576-amino-acid polypeptide reads, in one-letter code: Arginine--tRNA ligase (576 aa).

Positions alanine 126–histidine 136 match the 'HIGH' region motif.

It belongs to the class-I aminoacyl-tRNA synthetase family. As to quaternary structure, monomer.

The protein localises to the cytoplasm. It carries out the reaction tRNA(Arg) + L-arginine + ATP = L-arginyl-tRNA(Arg) + AMP + diphosphate. This chain is Arginine--tRNA ligase, found in Rickettsia canadensis (strain McKiel).